The chain runs to 491 residues: E3 ubiquitin-protein ligase Hakai (491 aa).

Residues 1–61 (MDHTDNELQG…PAKAPPGDEE (61 aa)) are disordered. An RING-type zinc finger spans residues 109–149 (CDKCGLPIKIYGRMIPCKHVFCYDCAILHEKKGDKMCPGCS). The tract at residues 148–206 (CSDPVQRIEQCTRGSLFMCSIVQGCKRTYLSQRDLQAHINHRHMRAGKPVTRASLENVH) is HYB domain. The segment at 164-190 (FMCSIVQGCKRTYLSQRDLQAHINHRH) adopts a C2H2-type zinc-finger fold. Phosphoserine occurs at positions 201, 285, and 290. The tract at residues 255–491 (QPHEDIRAPP…DQTRYRPYYQ (237 aa)) is disordered. 3 stretches are compositionally biased toward pro residues: residues 342–359 (APPP…PHPP), 372–389 (APPP…PPPG), and 399–423 (MNHP…PPHH). Residues 427-442 (NSLPQFTEDQGTLSPP) are compositionally biased toward polar residues. Positions 457 to 478 (PRGPPPPPRLQGPPSQTPLPGP) are enriched in pro residues.

This sequence belongs to the Hakai family. As to quaternary structure, homodimer. Interacts with tyrosine-phosphorylated SRC substrates. Component of the WMM complex, a N6-methyltransferase complex composed of a catalytic subcomplex, named MAC, and of an associated subcomplex, named MACOM. The MAC subcomplex is composed of METTL3 and METTL14. The MACOM subcomplex is composed of WTAP, ZC3H13, CBLL1/HAKAI, VIRMA, and, in some cases of RBM15 (RBM15 or RBM15B). Also a component of a MACOM-like complex, named WTAP complex, composed of WTAP, ZC3H13, CBLL1, VIRMA, RBM15, BCLAF1 and THRAP3. In terms of processing, phosphorylated on tyrosine residues.

Its subcellular location is the nucleus speckle. It localises to the nucleus. It is found in the nucleoplasm. The protein resides in the cytoplasm. The enzyme catalyses S-ubiquitinyl-[E2 ubiquitin-conjugating enzyme]-L-cysteine + [acceptor protein]-L-lysine = [E2 ubiquitin-conjugating enzyme]-L-cysteine + N(6)-ubiquitinyl-[acceptor protein]-L-lysine.. Its pathway is protein modification; protein ubiquitination. In terms of biological role, E3 ubiquitin-protein ligase that mediates ubiquitination of several tyrosine-phosphorylated Src substrates, including CDH1, CTTN and DOK1. Targets CDH1 for endocytosis and degradation. Associated component of the WMM complex, a complex that mediates N6-methyladenosine (m6A) methylation of RNAs, a modification that plays a role in the efficiency of mRNA splicing and RNA processing. Its function in the WMM complex is unknown. The chain is E3 ubiquitin-protein ligase Hakai from Homo sapiens (Human).